The following is a 969-amino-acid chain: Squamosa promoter-binding-like protein 6 (969 aa).

Disordered regions lie at residues 1–25 (MEAA…DMDR) and 54–81 (EASG…VNAR). The segment covering 55–74 (ASGLALNSSPSSSEEAGAAS) has biased composition (low complexity). The SBP-type zinc finger occupies 149–226 (GPACQVEGCT…AGHNRRRRKT (78 aa)). Residues cysteine 152, cysteine 157, cysteine 174, histidine 177, cysteine 193, cysteine 196, histidine 200, and cysteine 212 each coordinate Zn(2+). The Bipartite nuclear localization signal motif lies at 209 to 225 (KRSCRRRLAGHNRRRRK). Positions 377 to 434 (GMEGFEDGYEGSPTPAFKTTDSPNCPSWMHQDSTQSPPQTSGNSDSTSAQSLSSSNGD) are disordered. The span at 393–419 (FKTTDSPNCPSWMHQDSTQSPPQTSGN) shows a compositional bias: polar residues. The segment covering 420-431 (SDSTSAQSLSSS) has biased composition (low complexity).

Ubiquitous.

Its subcellular location is the nucleus. Its function is as follows. Trans-acting factor that binds specifically to the consensus nucleotide sequence 5'-TNCGTACAA-3'. This Oryza sativa subsp. japonica (Rice) protein is Squamosa promoter-binding-like protein 6 (SPL6).